The primary structure comprises 371 residues: E3 ubiquitin-protein ligase RHF1A (371 aa).

The segment at 46-87 adopts an RING-type; atypical zinc-finger fold; the sequence is CSICLEPFTLQDPSTVTSCKHEYHLQCIIEWSQRSKECPICW. Disordered stretches follow at residues 199 to 254 and 348 to 371; these read HQNS…SSLP and EANS…GETC. The segment covering 200-225 has biased composition (polar residues); sequence QNSNPCPSPGSMTPSPVSGHSSIPAD. Residues 226–252 are compositionally biased toward low complexity; that stretch reads SNNGSRISPGPSPSRSSQSPKSPEASS.

In terms of assembly, interacts with KRP6. As to expression, expressed in stems, flowers, green siliques, cauline leaves, seeds and roots.

The catalysed reaction is S-ubiquitinyl-[E2 ubiquitin-conjugating enzyme]-L-cysteine + [acceptor protein]-L-lysine = [E2 ubiquitin-conjugating enzyme]-L-cysteine + N(6)-ubiquitinyl-[acceptor protein]-L-lysine.. The protein operates within protein modification; protein ubiquitination. E3 ubiquitin-protein ligase involved in the positive regulation of the gametogenesis progression. Mediates the proteasomal degradation of KRP6, a cyclin-dependent kinase inhibitor which accumulates during meiosis and blocks the progression of subsequent mitoses during gametophyte development. Functions in association with RHF2A. Possesses E3 ubiquitin-protein ligase activity when associated with the E2 enzyme UBC8 in vitro. The chain is E3 ubiquitin-protein ligase RHF1A from Arabidopsis thaliana (Mouse-ear cress).